Consider the following 457-residue polypeptide: Bifunctional protein GlmU (457 aa).

The interval 1–229 is pyrophosphorylase; the sequence is MSNSAKSVVI…HSEMEGVNNR (229 aa). Residues 11-14, Lys25, Gln76, 81-82, 103-105, Gly140, Glu154, Asn169, and Asn227 contribute to the UDP-N-acetyl-alpha-D-glucosamine site; these read LAAG, GT, and YGD. Asp105 lines the Mg(2+) pocket. Residue Asn227 participates in Mg(2+) binding. The segment at 230–250 is linker; sequence LQLAALERIYQTEQAERLLLE. Positions 251 to 457 are N-acetyltransferase; the sequence is GVMLLDPARF…GWKRPVKKKQ (207 aa). UDP-N-acetyl-alpha-D-glucosamine-binding residues include Arg333 and Lys351. Residue His363 is the Proton acceptor of the active site. Residues Tyr366 and Asn377 each coordinate UDP-N-acetyl-alpha-D-glucosamine. Residues Ala380, 386 to 387, Ser405, Ala423, and Arg440 contribute to the acetyl-CoA site; that span reads NY.

In the N-terminal section; belongs to the N-acetylglucosamine-1-phosphate uridyltransferase family. It in the C-terminal section; belongs to the transferase hexapeptide repeat family. Homotrimer. Requires Mg(2+) as cofactor.

It localises to the cytoplasm. It carries out the reaction alpha-D-glucosamine 1-phosphate + acetyl-CoA = N-acetyl-alpha-D-glucosamine 1-phosphate + CoA + H(+). The catalysed reaction is N-acetyl-alpha-D-glucosamine 1-phosphate + UTP + H(+) = UDP-N-acetyl-alpha-D-glucosamine + diphosphate. It functions in the pathway nucleotide-sugar biosynthesis; UDP-N-acetyl-alpha-D-glucosamine biosynthesis; N-acetyl-alpha-D-glucosamine 1-phosphate from alpha-D-glucosamine 6-phosphate (route II): step 2/2. Its pathway is nucleotide-sugar biosynthesis; UDP-N-acetyl-alpha-D-glucosamine biosynthesis; UDP-N-acetyl-alpha-D-glucosamine from N-acetyl-alpha-D-glucosamine 1-phosphate: step 1/1. It participates in bacterial outer membrane biogenesis; LPS lipid A biosynthesis. Its function is as follows. Catalyzes the last two sequential reactions in the de novo biosynthetic pathway for UDP-N-acetylglucosamine (UDP-GlcNAc). The C-terminal domain catalyzes the transfer of acetyl group from acetyl coenzyme A to glucosamine-1-phosphate (GlcN-1-P) to produce N-acetylglucosamine-1-phosphate (GlcNAc-1-P), which is converted into UDP-GlcNAc by the transfer of uridine 5-monophosphate (from uridine 5-triphosphate), a reaction catalyzed by the N-terminal domain. The protein is Bifunctional protein GlmU of Proteus mirabilis (strain HI4320).